The sequence spans 240 residues: MTKIRTVSDAKRKFFTHYSRPISSIYRRFVEELLVEMHLLSVNIDFTYDPIFALGIVTSFNSFMQGYQPAEQLPAIFNALCHGVDQNPDQVRQDAKNVAASAHHIGLDAWVTAAASEQASGDNLLLNTLTGIHQRHKFKYSRLFAIGLYTLLADQDPEVKDNDEKRQDYLTRLSELLDLSLDKVVKDLDLYRSNLEKVDQLLKVLEDAAEAERKKKEKQAASTTPAIEEAPVTTAESSES.

Residues 186-222 (KDLDLYRSNLEKVDQLLKVLEDAAEAERKKKEKQAAS) adopt a coiled-coil conformation. Positions 212 to 240 (ERKKKEKQAASTTPAIEEAPVTTAESSES) are disordered.

Belongs to the THF1 family.

In terms of biological role, may be involved in photosynthetic membrane biogenesis. The polypeptide is Protein Thf1 (Synechocystis sp. (strain ATCC 27184 / PCC 6803 / Kazusa)).